Reading from the N-terminus, the 435-residue chain is Adenylosuccinate lyase (435 aa).

N(6)-(1,2-dicarboxyethyl)-AMP is bound by residues 4–5 (RY), 73–75 (RHD), and 99–100 (TS). H147 (proton donor/acceptor) is an active-site residue. Q218 contacts N(6)-(1,2-dicarboxyethyl)-AMP. S268 acts as the Proton donor/acceptor in catalysis. Residues S269, 274–276 (KKN), N282, and 313–317 (SAERV) each bind N(6)-(1,2-dicarboxyethyl)-AMP.

The protein belongs to the lyase 1 family. Adenylosuccinate lyase subfamily. Homotetramer. Residues from neighboring subunits contribute catalytic and substrate-binding residues to each active site.

The enzyme catalyses N(6)-(1,2-dicarboxyethyl)-AMP = fumarate + AMP. The catalysed reaction is (2S)-2-[5-amino-1-(5-phospho-beta-D-ribosyl)imidazole-4-carboxamido]succinate = 5-amino-1-(5-phospho-beta-D-ribosyl)imidazole-4-carboxamide + fumarate. Its pathway is purine metabolism; AMP biosynthesis via de novo pathway; AMP from IMP: step 2/2. It participates in purine metabolism; IMP biosynthesis via de novo pathway; 5-amino-1-(5-phospho-D-ribosyl)imidazole-4-carboxamide from 5-amino-1-(5-phospho-D-ribosyl)imidazole-4-carboxylate: step 2/2. Its function is as follows. Catalyzes two reactions in de novo purine nucleotide biosynthesis. Catalyzes the breakdown of 5-aminoimidazole- (N-succinylocarboxamide) ribotide (SAICAR or 2-[5-amino-1-(5-phospho-beta-D-ribosyl)imidazole-4-carboxamido]succinate) to 5-aminoimidazole-4-carboxamide ribotide (AICAR or 5-amino-1-(5-phospho-beta-D-ribosyl)imidazole-4-carboxamide) and fumarate, and of adenylosuccinate (ADS or N(6)-(1,2-dicarboxyethyl)-AMP) to adenosine monophosphate (AMP) and fumarate. This chain is Adenylosuccinate lyase (purB), found in Deinococcus radiodurans (strain ATCC 13939 / DSM 20539 / JCM 16871 / CCUG 27074 / LMG 4051 / NBRC 15346 / NCIMB 9279 / VKM B-1422 / R1).